Reading from the N-terminus, the 174-residue chain is NADH-ubiquinone oxidoreductase chain 6 (174 aa).

Helical transmembrane passes span 24-44, 53-73, 82-102, and 143-163; these read LALG…TGLM, ILFL…TSLA, MKLT…SFIM, and FITI…VKIT.

The protein belongs to the complex I subunit 6 family.

It localises to the mitochondrion membrane. It catalyses the reaction a ubiquinone + NADH + 5 H(+)(in) = a ubiquinol + NAD(+) + 4 H(+)(out). Core subunit of the mitochondrial membrane respiratory chain NADH dehydrogenase (Complex I) that is believed to belong to the minimal assembly required for catalysis. Complex I functions in the transfer of electrons from NADH to the respiratory chain. The immediate electron acceptor for the enzyme is believed to be ubiquinone. In Drosophila melanogaster (Fruit fly), this protein is NADH-ubiquinone oxidoreductase chain 6 (mt:ND6).